The sequence spans 547 residues: Probable ATP-dependent RNA helicase DDX56 (547 aa).

A Q motif motif is present at residues 7-35 (LGFEHMGLDPRLLQAVTDLGWSRPTLIQE). The region spanning 38 to 218 (IPLALEGKDL…ELILHNPVTL (181 aa)) is the Helicase ATP-binding domain. 51-58 (ARTGSGKT) lines the ATP pocket. S126 carries the post-translational modification Phosphoserine. T141 carries the post-translational modification Phosphothreonine. The short motif at 166 to 169 (DEAD) is the DEAD box element. Residues 230–424 (QLQQFQVVCE…PYQFRMEEIE (195 aa)) enclose the Helicase C-terminal domain. Composition is skewed to basic residues over residues 506-525 (RPHK…KRAK) and 532-547 (SFKH…AKPS). The segment at 506–547 (RPHKKRKKLSSSCRKAKRAKSQNPLRSFKHKGKKFRPTAKPS) is disordered. Residue S532 is modified to Phosphoserine.

Belongs to the DEAD box helicase family. DDX56/DBP9 subfamily. In terms of assembly, may form homooligomeric complexes. Interacts with IRF3. Interacts with OCT4 and POU5F1. As to quaternary structure, (Microbial infection) Interacts with West Nile virus capsid protein C. (Microbial infection) Interacts with foot-and-mouth disease virus protein 3A; this interaction leads to inhibition of type I interferon production. In terms of assembly, (Microbial infection) Interacts with EMCV protein 3C; this interaction leads to inhibition of type I interferon production. Detected in heart, brain, liver, pancreas, placenta and lung.

The protein resides in the nucleus. It localises to the nucleolus. The enzyme catalyses ATP + H2O = ADP + phosphate + H(+). Nucleolar RNA helicase that plays a role in various biological processes including innate immunity, ribosome biogenesis or nucleolus organization. Plays an essential role in maintaining nucleolar integrity in planarian stem cells. Maintains embryonic stem cells proliferation by conventional regulation of ribosome assembly and interaction with OCT4 and POU5F1 complex. Regulates antiviral innate immunity by inhibiting the virus-triggered signaling nuclear translocation of IRF3. Mechanistically, acts by disrupting the interaction between IRF3 and importin IPO5. May play a role in later stages of the processing of the pre-ribosomal particles leading to mature 60S ribosomal subunits. Has intrinsic ATPase activity. In terms of biological role, (Microbial infection) Helicase activity is important for packaging viral RNA into virions during West Nile virus infection. Its function is as follows. (Microbial infection) Plays a positive role in foot-and-mouth disease virus replication by inhibiting the phosphorylation of IRF3 leading to inhibition of type I interferon. Functionally, (Microbial infection) Plays a positive role in EMCV replication by interrupting IRF3 phosphorylation and its nucleus translocation. This chain is Probable ATP-dependent RNA helicase DDX56 (DDX56), found in Homo sapiens (Human).